The primary structure comprises 639 residues: Transcription factor phomR' (639 aa).

A DNA-binding region (zn(2)-C6 fungal-type) is located at residues 14–41 (CWTCRLRRKKCNEGGPPCDNCEARGIHC). 2 disordered regions span residues 58 to 136 (REEA…AGTG) and 476 to 499 (LPRS…TGPE). The segment covering 68–108 (SGRGRSYSRSSSTAAAAAPKPAEGAMVTGGSSSSSRGSGSS) has biased composition (low complexity).

Its subcellular location is the nucleus. Transcription factor; part of the gene cluster that mediates the biosynthesis of the phomopsins, a group of hexapeptide mycotoxins which infects lupins and causes lupinosis disease in livestock. May play a role in the regulation of the production of phomopsins. This Diaporthe leptostromiformis (Lupinosis disease fungus) protein is Transcription factor phomR'.